The primary structure comprises 227 residues: Zeamatin (227 aa).

The first 20 residues, 1 to 20, serve as a signal peptide directing secretion; sequence MAGSVAIVGIFVALLAVAGE. 8 cysteine pairs are disulfide-bonded: C30-C226, C72-C82, C87-C93, C139-C215, C145-C198, C153-C163, C167-C176, and C177-C185.

It belongs to the thaumatin family.

Has antifungal activity. Inhibits Candida albicans and Trichoderma reesei; marginal inhibition observed against Alternaria solani and Neurospora crassa. This is Zeamatin (Zlp) from Zea mays (Maize).